Consider the following 332-residue polypeptide: MATRAVARRKSAAGETSGSATSVRANGGELADRDLVGMYLDEIARTPLLDAAKEVELSQTIEAGVFARQVLEGYEETGADATREELQALIDESERAKDVFIRSNLRLVVAVARRYPRSGLPLLDLIQEGNAGLVRAVEKFDYRKGFKFSTYATWWIRQAITRSIADQSRTIRLPVHLVEELGRIRRVQREFNREHGREPEPAEIAAELGSTPERVTDVLDWARDPVSLNMSVDDEGETQFGDLLEDTSAVSPEQSVLTLLRSEELDDLIGRLDPRTASIIKMRYGIDDGRERTLTEVGKEHGLTRERIRQIEKHALLELKKLARDTGFEAAA.

A compositionally biased stretch (basic residues) spans 1-11 (MATRAVARRKS). The disordered stretch occupies residues 1–25 (MATRAVARRKSAAGETSGSATSVRA). Low complexity predominate over residues 13-22 (AGETSGSATS). The Polymerase core binding signature appears at 124-137 (DLIQEGNAGLVRAV). Positions 294–313 (LTEVGKEHGLTRERIRQIEK) form a DNA-binding region, H-T-H motif.

The protein belongs to the sigma-70 factor family. As to quaternary structure, interacts transiently with the RNA polymerase catalytic core.

Its function is as follows. Sigma factors are initiation factors that promote the attachment of RNA polymerase to specific initiation sites and are then released. The polypeptide is RNA polymerase principal sigma factor HrdD (hrdD) (Streptomyces coelicolor (strain ATCC BAA-471 / A3(2) / M145)).